A 262-amino-acid chain; its full sequence is MTDLQNIEPQALRKLIRDKKVTGHTSGMAKGYIQANVVILPLDYAYDFLKFCFKNPKTCPLLDISEVGEVNFSKYGKDADITTDVGAYRVYENGELIETPTDVKHLFNDQMVSFLIGCSFTFEHALLEAGIPLRHLEEGHNVPMYITNIPAEPAGRFEGNITVSMRPMTMKDAIRATEITTHFKNVHGTPIHIGNPADFGIKDLENPDFGEPVKIKDNEVPVFWGCGVTPQSVALDAKPELIITHAPGHMFITDVKDSELSD.

The protein belongs to the D-glutamate cyclase family.

The protein is Putative hydro-lyase Sca_2211 of Staphylococcus carnosus (strain TM300).